A 664-amino-acid chain; its full sequence is Ent-copalyl diphosphate synthase 5 (664 aa).

Lysine 101 is a substrate binding site. Residues aspartate 233 and aspartate 235 each contribute to the Mg(2+) site. Positions 233 to 236 (DIDD) match the DXDD motif motif. Lysine 320 contributes to the substrate binding site.

This sequence belongs to the terpene synthase family. Tpsc subfamily. It depends on Mg(2+) as a cofactor. As to expression, ubiquitous expression in roots, stems, leaves and flowers.

Its subcellular location is the plastid. The protein localises to the chloroplast. It carries out the reaction (2E,6E,10E)-geranylgeranyl diphosphate = ent-copalyl diphosphate. It functions in the pathway secondary metabolite biosynthesis; terpenoid biosynthesis. In terms of biological role, involved in the biosynthesis of ent-kaurene diterpenoids natural products such as oridonin, miltiradiene, eriocalyxin B and nezukol, known to exhibit antitumor, anti-inflammatory and antibacterial activities. Catalyzes the conversion of (2E,6E,10E)-geranylgeranyl diphosphate (GGPP) to ent-copalyl diphosphate (ent-CPP). In Isodon rubescens (Rabdosia rubescens), this protein is Ent-copalyl diphosphate synthase 5.